Here is a 363-residue protein sequence, read N- to C-terminus: Probable mannitol dehydrogenase 3 (363 aa).

The Zn(2+) site is built by C51, H73, C104, C107, C110, C118, and C168.

The protein belongs to the zinc-containing alcohol dehydrogenase family. Requires Zn(2+) as cofactor.

The enzyme catalyses D-mannitol + NAD(+) = D-mannose + NADH + H(+). Functionally, oxidizes mannitol to mannose. Provides the initial step by which translocated mannitol is committed to central metabolism and, by regulating mannitol pool size, is important in regulating salt tolerance at the cellular level. In Stylosanthes humilis (Townsville stylo), this protein is Probable mannitol dehydrogenase 3 (CAD3).